A 525-amino-acid chain; its full sequence is Putative ankyrin repeat protein FPV228 (525 aa).

ANK repeat units follow at residues 39–71 (HPDN…TRDI), 72–122 (LGNT…ACNN), 123–152 (LNQT…KVNI), 156–185 (YGNT…DVNI), 190–226 (YWYS…TRCR), 227–254 (LNTT…DINA), 258–287 (NDNA…DVNM), 291–320 (RGKT…NPNI), and 324–353 (IMNT…DINH).

The protein is Putative ankyrin repeat protein FPV228 of Fowlpox virus (strain NVSL) (FPV).